The following is a 339-amino-acid chain: Ketol-acid reductoisomerase (NADP(+)) (339 aa).

The region spanning 1–182 (MRVYYDRDAD…GGGRAGVIET (182 aa)) is the KARI N-terminal Rossmann domain. NADP(+) contacts are provided by residues 24–27 (YGSQ), arginine 48, serine 51, threonine 53, and 83–86 (DELQ). Histidine 108 is a catalytic residue. Glycine 134 contributes to the NADP(+) binding site. A KARI C-terminal knotted domain is found at 183–328 (TFKEECETDL…EKLRAMMPWI (146 aa)). The Mg(2+) site is built by aspartate 191, glutamate 195, glutamate 227, and glutamate 231. A substrate-binding site is contributed by serine 252.

Belongs to the ketol-acid reductoisomerase family. Requires Mg(2+) as cofactor.

It carries out the reaction (2R)-2,3-dihydroxy-3-methylbutanoate + NADP(+) = (2S)-2-acetolactate + NADPH + H(+). The enzyme catalyses (2R,3R)-2,3-dihydroxy-3-methylpentanoate + NADP(+) = (S)-2-ethyl-2-hydroxy-3-oxobutanoate + NADPH + H(+). It participates in amino-acid biosynthesis; L-isoleucine biosynthesis; L-isoleucine from 2-oxobutanoate: step 2/4. The protein operates within amino-acid biosynthesis; L-valine biosynthesis; L-valine from pyruvate: step 2/4. In terms of biological role, involved in the biosynthesis of branched-chain amino acids (BCAA). Catalyzes an alkyl-migration followed by a ketol-acid reduction of (S)-2-acetolactate (S2AL) to yield (R)-2,3-dihydroxy-isovalerate. In the isomerase reaction, S2AL is rearranged via a Mg-dependent methyl migration to produce 3-hydroxy-3-methyl-2-ketobutyrate (HMKB). In the reductase reaction, this 2-ketoacid undergoes a metal-dependent reduction by NADPH to yield (R)-2,3-dihydroxy-isovalerate. In Xanthobacter autotrophicus (strain ATCC BAA-1158 / Py2), this protein is Ketol-acid reductoisomerase (NADP(+)).